A 209-amino-acid polypeptide reads, in one-letter code: FMN-dependent NADH:quinone oxidoreductase (209 aa).

FMN-binding positions include S10, 16–18 (SHS), and 98–101 (MWNF).

Belongs to the azoreductase type 1 family. Homodimer. The cofactor is FMN.

It catalyses the reaction 2 a quinone + NADH + H(+) = 2 a 1,4-benzosemiquinone + NAD(+). The enzyme catalyses N,N-dimethyl-1,4-phenylenediamine + anthranilate + 2 NAD(+) = 2-(4-dimethylaminophenyl)diazenylbenzoate + 2 NADH + 2 H(+). In terms of biological role, quinone reductase that provides resistance to thiol-specific stress caused by electrophilic quinones. Also exhibits azoreductase activity. Catalyzes the reductive cleavage of the azo bond in aromatic azo compounds to the corresponding amines. This is FMN-dependent NADH:quinone oxidoreductase from Nitratidesulfovibrio vulgaris (strain ATCC 29579 / DSM 644 / CCUG 34227 / NCIMB 8303 / VKM B-1760 / Hildenborough) (Desulfovibrio vulgaris).